Consider the following 154-residue polypeptide: Ribosomal RNA large subunit methyltransferase H (154 aa).

Gly102 is an S-adenosyl-L-methionine binding site.

The protein belongs to the RNA methyltransferase RlmH family. As to quaternary structure, homodimer.

Its subcellular location is the cytoplasm. The enzyme catalyses pseudouridine(1915) in 23S rRNA + S-adenosyl-L-methionine = N(3)-methylpseudouridine(1915) in 23S rRNA + S-adenosyl-L-homocysteine + H(+). Functionally, specifically methylates the pseudouridine at position 1915 (m3Psi1915) in 23S rRNA. This Phenylobacterium zucineum (strain HLK1) protein is Ribosomal RNA large subunit methyltransferase H.